A 139-amino-acid polypeptide reads, in one-letter code: ATP synthase epsilon chain (139 aa).

Belongs to the ATPase epsilon chain family. F-type ATPases have 2 components, CF(1) - the catalytic core - and CF(0) - the membrane proton channel. CF(1) has five subunits: alpha(3), beta(3), gamma(1), delta(1), epsilon(1). CF(0) has three main subunits: a, b and c.

It localises to the cell inner membrane. In terms of biological role, produces ATP from ADP in the presence of a proton gradient across the membrane. The protein is ATP synthase epsilon chain of Shigella boydii serotype 18 (strain CDC 3083-94 / BS512).